We begin with the raw amino-acid sequence, 235 residues long: Serine protease SplA (235 aa).

The N-terminal stretch at 1–35 (MNKNVMVKGLTALTILTSLGFAENISNQPHSIAKA) is a signal peptide. Catalysis depends on charge relay system residues histidine 74, aspartate 113, and serine 189.

The protein belongs to the peptidase S1B family.

It is found in the secreted. The chain is Serine protease SplA (splA) from Staphylococcus aureus (strain USA300).